Consider the following 398-residue polypeptide: 1-deoxy-D-xylulose 5-phosphate reductoisomerase (398 aa).

Residues Thr10, Gly11, Ser12, Val13, Gly36, Lys37, Asn38, and Asn124 each contribute to the NADPH site. Lys125 contributes to the 1-deoxy-D-xylulose 5-phosphate binding site. Glu126 provides a ligand contact to NADPH. Asp150 is a binding site for Mn(2+). 1-deoxy-D-xylulose 5-phosphate-binding residues include Ser151, Glu152, Ser186, and His209. Glu152 is a Mn(2+) binding site. NADPH is bound at residue Gly215. Ser222, Asn227, Lys228, and Glu231 together coordinate 1-deoxy-D-xylulose 5-phosphate. Glu231 provides a ligand contact to Mn(2+).

This sequence belongs to the DXR family. As to quaternary structure, homodimer. Mg(2+) serves as cofactor. Mn(2+) is required as a cofactor.

It catalyses the reaction 2-C-methyl-D-erythritol 4-phosphate + NADP(+) = 1-deoxy-D-xylulose 5-phosphate + NADPH + H(+). It participates in isoprenoid biosynthesis; isopentenyl diphosphate biosynthesis via DXP pathway; isopentenyl diphosphate from 1-deoxy-D-xylulose 5-phosphate: step 1/6. In terms of biological role, catalyzes the NADPH-dependent rearrangement and reduction of 1-deoxy-D-xylulose-5-phosphate (DXP) to 2-C-methyl-D-erythritol 4-phosphate (MEP). This is 1-deoxy-D-xylulose 5-phosphate reductoisomerase from Photorhabdus laumondii subsp. laumondii (strain DSM 15139 / CIP 105565 / TT01) (Photorhabdus luminescens subsp. laumondii).